Here is a 369-residue protein sequence, read N- to C-terminus: tRNA/tmRNA (uracil-C(5))-methyltransferase (369 aa).

Gln-190, Tyr-218, Asn-223, Glu-239, and Asp-301 together coordinate S-adenosyl-L-methionine. The active-site Nucleophile is Cys-326. Glu-360 functions as the Proton acceptor in the catalytic mechanism.

Belongs to the class I-like SAM-binding methyltransferase superfamily. RNA M5U methyltransferase family. TrmA subfamily.

The catalysed reaction is uridine(54) in tRNA + S-adenosyl-L-methionine = 5-methyluridine(54) in tRNA + S-adenosyl-L-homocysteine + H(+). It carries out the reaction uridine(341) in tmRNA + S-adenosyl-L-methionine = 5-methyluridine(341) in tmRNA + S-adenosyl-L-homocysteine + H(+). Functionally, dual-specificity methyltransferase that catalyzes the formation of 5-methyluridine at position 54 (m5U54) in all tRNAs, and that of position 341 (m5U341) in tmRNA (transfer-mRNA). The sequence is that of tRNA/tmRNA (uracil-C(5))-methyltransferase from Vibrio parahaemolyticus serotype O3:K6 (strain RIMD 2210633).